We begin with the raw amino-acid sequence, 1351 residues long: DNA-directed RNA polymerase subunit beta' (1351 aa).

Residues Cys70, Cys72, Cys85, and Cys88 each coordinate Zn(2+). The Mg(2+) site is built by Asp460, Asp462, and Asp464. The Zn(2+) site is built by Cys801, Cys875, Cys882, and Cys885.

This sequence belongs to the RNA polymerase beta' chain family. The RNAP catalytic core consists of 2 alpha, 1 beta, 1 beta' and 1 omega subunit. When a sigma factor is associated with the core the holoenzyme is formed, which can initiate transcription. Requires Mg(2+) as cofactor. It depends on Zn(2+) as a cofactor.

It carries out the reaction RNA(n) + a ribonucleoside 5'-triphosphate = RNA(n+1) + diphosphate. Its function is as follows. DNA-dependent RNA polymerase catalyzes the transcription of DNA into RNA using the four ribonucleoside triphosphates as substrates. The sequence is that of DNA-directed RNA polymerase subunit beta' from Syntrophobacter fumaroxidans (strain DSM 10017 / MPOB).